A 374-amino-acid polypeptide reads, in one-letter code: Quinolinate synthase (374 aa).

H53 and S70 together coordinate iminosuccinate. Position 116 (C116) interacts with [4Fe-4S] cluster. Residues 148–150 (YMN) and S169 contribute to the iminosuccinate site. Residue C236 coordinates [4Fe-4S] cluster. Residues 262–264 (HPE) and T279 contribute to the iminosuccinate site. C327 contributes to the [4Fe-4S] cluster binding site.

This sequence belongs to the quinolinate synthase family. Type 3 subfamily. Requires [4Fe-4S] cluster as cofactor.

Its subcellular location is the cytoplasm. It carries out the reaction iminosuccinate + dihydroxyacetone phosphate = quinolinate + phosphate + 2 H2O + H(+). It participates in cofactor biosynthesis; NAD(+) biosynthesis; quinolinate from iminoaspartate: step 1/1. In terms of biological role, catalyzes the condensation of iminoaspartate with dihydroxyacetone phosphate to form quinolinate. The chain is Quinolinate synthase from Halobacterium salinarum (strain ATCC 29341 / DSM 671 / R1).